The following is a 153-amino-acid chain: Histone H2B.3 (153 aa).

Positions 1-28 (MAPKADKKPAAKKPAEEEPATEKAEKAP) are enriched in basic and acidic residues. Residues 1–60 (MAPKADKKPAAKKPAEEEPATEKAEKAPAGKKPKAEKRLPAGKSAGKEGGEGKKGKKKAK) form a disordered region. N6-acetyllysine is present on residues lysine 7 and lysine 37. A Glycyl lysine isopeptide (Lys-Gly) (interchain with G-Cter in ubiquitin) cross-link involves residue lysine 149.

It belongs to the histone H2B family. As to quaternary structure, the nucleosome is a histone octamer containing two molecules each of H2A, H2B, H3 and H4 assembled in one H3-H4 heterotetramer and two H2A-H2B heterodimers. The octamer wraps approximately 147 bp of DNA. Can be acetylated to form H2BK6ac and H2BK33ac. In terms of processing, monoubiquitinated to form H2BK143ub1; may give a specific tag for epigenetic transcriptional activation.

It is found in the nucleus. The protein resides in the chromosome. In terms of biological role, core component of nucleosome. Nucleosomes wrap and compact DNA into chromatin, limiting DNA accessibility to the cellular machineries which require DNA as a template. Histones thereby play a central role in transcription regulation, DNA repair, DNA replication and chromosomal stability. DNA accessibility is regulated via a complex set of post-translational modifications of histones, also called histone code, and nucleosome remodeling. This is Histone H2B.3 from Zea mays (Maize).